The chain runs to 351 residues: S-adenosylmethionine:tRNA ribosyltransferase-isomerase (351 aa).

Belongs to the QueA family. Monomer.

Its subcellular location is the cytoplasm. It carries out the reaction 7-aminomethyl-7-carbaguanosine(34) in tRNA + S-adenosyl-L-methionine = epoxyqueuosine(34) in tRNA + adenine + L-methionine + 2 H(+). It functions in the pathway tRNA modification; tRNA-queuosine biosynthesis. Functionally, transfers and isomerizes the ribose moiety from AdoMet to the 7-aminomethyl group of 7-deazaguanine (preQ1-tRNA) to give epoxyqueuosine (oQ-tRNA). The sequence is that of S-adenosylmethionine:tRNA ribosyltransferase-isomerase from Sphingopyxis alaskensis (strain DSM 13593 / LMG 18877 / RB2256) (Sphingomonas alaskensis).